The primary structure comprises 267 residues: Very long chain fatty acid elongase 6 (267 aa).

N-linked (GlcNAc...) asparagine glycosylation is present at N2. The next 7 membrane-spanning stretches (helical) occupy residues 34 to 51, 70 to 90, 111 to 131, 136 to 156, 159 to 179, 197 to 217, and 234 to 254; these read FLFS…RHLM, LAVF…YILM, FWAY…IFII, KLIF…WYSY, MVAG…VMYS, FITL…YLVF, and IFWS…FFFE.

Belongs to the ELO family. ELOVL6 subfamily. In terms of processing, N-Glycosylated. As to expression, highly expressed in adrenal gland, liver, white adipose tissue (WAT), adult and fetal brain, cerebellum, spinal cord, testis, skin and peripheral nerve; where lipogenesis and steroidogenesis are active. Weakly expressed in kidney, heart, skeletal muscle, lung, and spleen.

Its subcellular location is the endoplasmic reticulum membrane. The catalysed reaction is a very-long-chain acyl-CoA + malonyl-CoA + H(+) = a very-long-chain 3-oxoacyl-CoA + CO2 + CoA. The enzyme catalyses hexadecanoyl-CoA + malonyl-CoA + H(+) = 3-oxooctadecanoyl-CoA + CO2 + CoA. It carries out the reaction (9Z)-hexadecenoyl-CoA + malonyl-CoA + H(+) = 3-oxo-(11Z)-octadecenoyl-CoA + CO2 + CoA. It catalyses the reaction dodecanoyl-CoA + malonyl-CoA + H(+) = 3-oxotetradecanoyl-CoA + CO2 + CoA. The catalysed reaction is tetradecanoyl-CoA + malonyl-CoA + H(+) = 3-oxohexadecanoyl-CoA + CO2 + CoA. The enzyme catalyses (9Z)-octadecenoyl-CoA + malonyl-CoA + H(+) = 3-oxo-(11Z)-eicosenoyl-CoA + CO2 + CoA. It carries out the reaction (9Z,12Z)-octadecadienoyl-CoA + malonyl-CoA + H(+) = (11Z,14Z)-3-oxoicosa-11,14-dienoyl-CoA + CO2 + CoA. It catalyses the reaction (9Z,12Z,15Z)-octadecatrienoyl-CoA + malonyl-CoA + H(+) = (11Z,14Z,17Z)-3-oxoeicosatrienoyl-CoA + CO2 + CoA. It participates in lipid metabolism; fatty acid biosynthesis. With respect to regulation, the reaction is stimulated by the presence of HSD17B12, the enzyme catalyzing the second step of the elongation cycle. Functionally, catalyzes the first and rate-limiting reaction of the four reactions that constitute the long-chain fatty acids elongation cycle. This endoplasmic reticulum-bound enzymatic process allows the addition of 2 carbons to the chain of long- and very long-chain fatty acids (VLCFAs) per cycle. Condensing enzyme that elongates fatty acids with 12, 14 and 16 carbons with higher activity toward C16:0 acyl-CoAs. Catalyzes the synthesis of unsaturated C16 long chain fatty acids and, to a lesser extent, C18:0 and those with low desaturation degree. May participate in the production of saturated and monounsaturated VLCFAs of different chain lengths that are involved in multiple biological processes as precursors of membrane lipids and lipid mediators. The polypeptide is Very long chain fatty acid elongase 6 (Mus musculus (Mouse)).